We begin with the raw amino-acid sequence, 953 residues long: Isoleucine--tRNA ligase (953 aa).

The short motif at 58 to 68 is the 'HIGH' region element; sequence PYANGNIHLGH. Glutamate 565 serves as a coordination point for L-isoleucyl-5'-AMP. The 'KMSKS' region motif lies at 606 to 610; it reads KMSKS. Lysine 609 is a binding site for ATP. Residues cysteine 916, cysteine 919, cysteine 936, and cysteine 939 each coordinate Zn(2+).

Belongs to the class-I aminoacyl-tRNA synthetase family. IleS type 1 subfamily. In terms of assembly, monomer. The cofactor is Zn(2+).

It is found in the cytoplasm. It carries out the reaction tRNA(Ile) + L-isoleucine + ATP = L-isoleucyl-tRNA(Ile) + AMP + diphosphate. In terms of biological role, catalyzes the attachment of isoleucine to tRNA(Ile). As IleRS can inadvertently accommodate and process structurally similar amino acids such as valine, to avoid such errors it has two additional distinct tRNA(Ile)-dependent editing activities. One activity is designated as 'pretransfer' editing and involves the hydrolysis of activated Val-AMP. The other activity is designated 'posttransfer' editing and involves deacylation of mischarged Val-tRNA(Ile). The chain is Isoleucine--tRNA ligase from Colwellia psychrerythraea (strain 34H / ATCC BAA-681) (Vibrio psychroerythus).